A 1100-amino-acid polypeptide reads, in one-letter code: Guanylate cyclase 2G (1100 aa).

A signal peptide spans 1 to 43; the sequence is MASRARSEPPLEHRFYGGAESHAGHSSLVLTLFVVMLMTCLEA. The Extracellular portion of the chain corresponds to 44–481; it reads AKLTVGFHAP…GAGMTASVTA (438 aa). 5 N-linked (GlcNAc...) asparagine glycosylation sites follow: Asn-55, Asn-85, Asn-94, Asn-418, and Asn-443. Residues 482–502 traverse the membrane as a helical segment; it reads VIPTVTLLVVASAAAITGLML. At 503 to 1100 the chain is on the cytoplasmic side; the sequence is WRLRGKVQNH…EEEAKVPEIL (598 aa). A Protein kinase domain is found at 549–826; the sequence is STVKISADCG…PAFPSIKKTL (278 aa). Residues 901-1031 enclose the Guanylate cyclase domain; it reads TIFFSDIVGF…DTVNMASRME (131 aa).

The protein belongs to the adenylyl cyclase class-4/guanylyl cyclase family. As to quaternary structure, homooligomer. May interact with NPR1/GC-A. Post-translationally, N-glycosylated. As to expression, expressed in lung, kidney and skeletal muscle. Low levels in intestine.

Its subcellular location is the cell membrane. The protein localises to the cytoplasm. It catalyses the reaction GTP = 3',5'-cyclic GMP + diphosphate. The sequence is that of Guanylate cyclase 2G (Gucy2g) from Rattus norvegicus (Rat).